An 842-amino-acid polypeptide reads, in one-letter code: G-type lectin S-receptor-like serine/threonine-protein kinase At1g11330 (842 aa).

The N-terminal stretch at 1–29 is a signal peptide; the sequence is MVVSVTIRRRFVLLLLACTCLLSRRLCFG. At 30–444 the chain is on the extracellular side; sequence EDRITFSSPI…AHSELKTHSN (415 aa). A Bulb-type lectin domain is found at 32–157; it reads RITFSSPIKD…RNNGEILWES (126 aa). 6 N-linked (GlcNAc...) asparagine glycosylation sites follow: Asn-63, Asn-94, Asn-122, Asn-130, Asn-196, and Asn-260. Positions 294–330 constitute an EGF-like; atypical domain; the sequence is PYTDCDAYGRCGRFGSCHAGENPPCKCVKGFVPKNNT. Cystine bridges form between Cys-298/Cys-310 and Cys-304/Cys-318. N-linked (GlcNAc...) asparagine glycans are attached at residues Asn-328, Asn-336, Asn-354, and Asn-396. The PAN domain occupies 349-435; sequence CERQRNVSNG…SGIDLFIRVA (87 aa). 2 cysteine pairs are disulfide-bonded: Cys-389–Cys-410 and Cys-393–Cys-399. The chain crosses the membrane as a helical span at residues 445–465; sequence LAVMIAAPVIGVMLIAAVCVL. Topologically, residues 466 to 842 are cytoplasmic; that stretch reads LACRKYKKRP…DVSLTAVTGR (377 aa). The Protein kinase domain occupies 524-810; it reads FSLRNKLGQG…SLADPKQPAF (287 aa). Residues 530–538 and Lys-552 each bind ATP; that span reads LGQGGFGPV. Phosphoserine is present on residues Ser-558 and Ser-573. The segment at 613-630 is caM-binding; it reads MKQKILDWKTRFNIMEGI. Asp-649 (proton acceptor) is an active-site residue. Ser-653 and Ser-666 each carry phosphoserine. The residue at position 683 (Thr-683) is a Phosphothreonine. A phosphoserine mark is found at Ser-726, Ser-727, Ser-821, and Ser-830. The tract at residues 814 to 842 is disordered; that stretch reads RGASEAESSDQSSQKVSINDVSLTAVTGR. Positions 818–827 are enriched in low complexity; that stretch reads EAESSDQSSQ. The span at 828-842 shows a compositional bias: polar residues; the sequence is KVSINDVSLTAVTGR. Residue Thr-837 is modified to Phosphothreonine.

This sequence belongs to the protein kinase superfamily. Ser/Thr protein kinase family.

Its subcellular location is the cell membrane. It catalyses the reaction L-seryl-[protein] + ATP = O-phospho-L-seryl-[protein] + ADP + H(+). The enzyme catalyses L-threonyl-[protein] + ATP = O-phospho-L-threonyl-[protein] + ADP + H(+). This Arabidopsis thaliana (Mouse-ear cress) protein is G-type lectin S-receptor-like serine/threonine-protein kinase At1g11330.